An 84-amino-acid chain; its full sequence is Cell division topological specificity factor (84 aa).

It belongs to the MinE family.

In terms of biological role, prevents the cell division inhibition by proteins MinC and MinD at internal division sites while permitting inhibition at polar sites. This ensures cell division at the proper site by restricting the formation of a division septum at the midpoint of the long axis of the cell. The protein is Cell division topological specificity factor of Burkholderia cenocepacia (strain HI2424).